The primary structure comprises 411 residues: Protein Brevis radix-like 2 (411 aa).

2 disordered regions span residues 10–31 and 103–149; these read KDGG…KSLT and AAPS…DDDE. Residues 20–31 are compositionally biased toward polar residues; it reads ATATPNSGKSLT. A compositionally biased stretch (acidic residues) spans 136-149; sequence GEEDYDDDDDDDDE. The BRX 1 domain occupies 161–217; sequence REWTAQVEPGVQITFVSIPGGAGNDLKRIRFSREMFNKWEAQRWWGENYDRVVELYN. Disordered stretches follow at residues 245–294 and 324–346; these read SRVG…VAAA and AGPA…ASVS. A compositionally biased stretch (low complexity) spans 276-294; the sequence is SRTASSKAQLSSSSSVAAA. One can recognise a BRX 2 domain in the interval 356 to 411; the sequence is TEWVEQDEPGVSITIREFGDGTRELRRVRFSRERFGEERAKVWWEQNRDRIHAQYL.

The protein belongs to the BRX family.

It localises to the nucleus. The polypeptide is Protein Brevis radix-like 2 (BRXL2) (Oryza sativa subsp. japonica (Rice)).